A 149-amino-acid chain; its full sequence is Oligosaccharyltransferase complex subunit ostc (149 aa).

Residues 1 to 32 (MESLYRVPFTVLECPNLKLKKPSWLHMPSAMT) are Cytoplasmic-facing. Residues 33-53 (VYAMVVVSYFLITGGIIYDVI) form a helical membrane-spanning segment. The Extracellular segment spans residues 54–83 (VEPPSVGSMTDEHGHQRPVAFLAYRVNGQY). A helical transmembrane segment spans residues 84-104 (IMEGLASSFLFTMGGLGFIIL). Topologically, residues 105 to 117 (DRSNAPNIPKLNR) are cytoplasmic. The helical transmembrane segment at 118 to 138 (FLLLFIGFVCVLLSFFMARVF) threads the bilayer. Over 139 to 149 (MRMKLPGYLMG) the chain is Extracellular.

It belongs to the OSTC family. Specific component of the STT3A-containing form of the oligosaccharyltransferase (OST) complex.

The protein localises to the membrane. The protein operates within protein modification; protein glycosylation. In terms of biological role, specific component of the STT3A-containing form of the oligosaccharyl transferase (OST) complex that catalyzes the initial transfer of a defined glycan (Glc(3)Man(9)GlcNAc(2) in eukaryotes) from the lipid carrier dolichol-pyrophosphate to an asparagine residue within an Asn-X-Ser/Thr consensus motif in nascent polypeptide chains, the first step in protein N-glycosylation. N-glycosylation occurs cotranslationally and the complex associates with the Sec61 complex at the channel-forming translocon complex that mediates protein translocation across the endoplasmic reticulum (ER). All subunits are required for a maximal enzyme activity. This Xenopus tropicalis (Western clawed frog) protein is Oligosaccharyltransferase complex subunit ostc.